The following is a 292-amino-acid chain: MSKKPRQIAFYGKGGIGKSTTSQNTLAQLATTFGQKIMIVGCDPKADSTRLILNTKAQQTVLHLAAELGSVEDLELEDVVATGFGGILCVESGGPEPGVGCAGRGIITSINFLEEQGAYDGMDFISYDVLGDVVCGGFAMPIRENKAQEIYIVCSGEMMAMYAANNIARGILKYAQSGSVRLGGLICNSRKTDREDELITELARRLNTQMIHFVPRDNVVQHAELRRMTVTQYNPEHPQANEYKQLADKILHNEKLTIPTPIEMDELEQLLIDFGVVEDEETAIKKLEAAGH.

12–19 (GKGGIGKS) contacts ATP. Position 101 (Cys-101) interacts with [4Fe-4S] cluster. Arg-104 is subject to ADP-ribosylarginine; by dinitrogenase reductase ADP-ribosyltransferase. Cys-135 provides a ligand contact to [4Fe-4S] cluster.

This sequence belongs to the NifH/BchL/ChlL family. In terms of assembly, homodimer. It depends on [4Fe-4S] cluster as a cofactor. The reversible ADP-ribosylation of Arg-104 inactivates the nitrogenase reductase and regulates nitrogenase activity.

The enzyme catalyses N2 + 8 reduced [2Fe-2S]-[ferredoxin] + 16 ATP + 16 H2O = H2 + 8 oxidized [2Fe-2S]-[ferredoxin] + 2 NH4(+) + 16 ADP + 16 phosphate + 6 H(+). The key enzymatic reactions in nitrogen fixation are catalyzed by the nitrogenase complex, which has 2 components: the iron protein and the molybdenum-iron protein. The polypeptide is Nitrogenase iron protein 1 (nifH1) (Paenibacillus durus (Paenibacillus azotofixans)).